Consider the following 230-residue polypeptide: Cyclin-dependent kinase inhibitor rum1 (230 aa).

Disordered stretches follow at residues 1-25, 43-118, and 188-230; these read MEPS…SFKG, PESD…DGLY, and SRVP…NLLR. Thr-13 is modified (phosphothreonine; by MAPK). Position 19 is a phosphoserine; by MAPK (Ser-19). 2 positions are modified to phosphothreonine; by cdc2: Thr-58 and Thr-62. The interval 67 to 147 is CDK inhibitory and cyclin-binding; that stretch reads LLPNLMLQDR…TFKPKLLFAD (81 aa). Residues 78-91 are compositionally biased toward basic and acidic residues; that stretch reads NSLERCMEEDREHN. Polar residues predominate over residues 93-102; sequence FLSSSDNQLL. Residues 101–230 are required for activity as a cdc2 kinase inhibitor; sequence LLSRKKRKPT…KDENRHNLLR (130 aa). Over residues 188–199 the composition is skewed to low complexity; the sequence is SRVPSSSSGSFV. Residues 219–230 are compositionally biased toward basic and acidic residues; that stretch reads NTKDENRHNLLR.

As to quaternary structure, interacts with cdc13, cig2 and pop1. In terms of processing, phosphorylated by cig1-associated cdc2 which leads to increased stability. Phosphorylation by MAPK reduces cdc2 kinase inhibitor ability.

It localises to the nucleus. Its function is as follows. Regulator of cell cycle G1 phase progression. Ensures the correct sequence of S phase and mitosis in the cell by acting as an inhibitor of the cdc2 mitotic kinase. Probably interacts with cdc2 to inhibit its action until the cell mass for Start is reached. Determines the length of the pre-Start G1 period and prevents mitosis from happening in early G1 cells. Required for maintaining pheromone-induced G1 arrest. Acts as an adapter protein since interaction with cdc13 promotes cyclin proteolysis during G1. Becomes a target for degradation at the G1/S phase transition, following phosphorylation by cig1-associated cdc2 at the G1/S phase transition. This chain is Cyclin-dependent kinase inhibitor rum1 (rum1), found in Schizosaccharomyces pombe (strain 972 / ATCC 24843) (Fission yeast).